Reading from the N-terminus, the 330-residue chain is Aspartate--ammonia ligase (330 aa).

Belongs to the class-II aminoacyl-tRNA synthetase family. AsnA subfamily.

Its subcellular location is the cytoplasm. It catalyses the reaction L-aspartate + NH4(+) + ATP = L-asparagine + AMP + diphosphate + H(+). The protein operates within amino-acid biosynthesis; L-asparagine biosynthesis; L-asparagine from L-aspartate (ammonia route): step 1/1. The polypeptide is Aspartate--ammonia ligase (Haemophilus influenzae (strain ATCC 51907 / DSM 11121 / KW20 / Rd)).